The primary structure comprises 49 residues: Large ribosomal subunit protein bL33A (49 aa).

The protein belongs to the bacterial ribosomal protein bL33 family.

The polypeptide is Large ribosomal subunit protein bL33A (Staphylococcus haemolyticus (strain JCSC1435)).